A 1066-amino-acid polypeptide reads, in one-letter code: Carbamoyl phosphate synthase large chain (1066 aa).

Residues 1–401 (MPKNNNIKKV…ALMKAVRSLE (401 aa)) form a carboxyphosphate synthetic domain region. Arg129, Arg169, Gly175, Gly176, Arg208, Ile210, Glu215, Gly241, Val242, His243, Gln284, and Glu298 together coordinate ATP. The region spanning 133–327 (KNTMEKIGEP…IAKVAAKIAL (195 aa)) is the ATP-grasp 1 domain. Mg(2+) contacts are provided by Gln284, Glu298, and Asn300. The Mn(2+) site is built by Gln284, Glu298, and Asn300. An oligomerization domain region spans residues 402–547 (QNIYSMNYGD…YSCFDSENEV (146 aa)). The segment at 548–931 (DATKTKKKVL…ALYKAFLGAG (384 aa)) is carbamoyl phosphate synthetic domain. Residues 673-863 (DEILEKCCIP…IVSLASKAVL (191 aa)) form the ATP-grasp 2 domain. ATP-binding residues include Arg709, Lys748, Leu750, Glu754, Gly779, Ile780, His781, Ser782, Gln822, and Glu834. Mg(2+) contacts are provided by Gln822, Glu834, and Asn836. Mn(2+) is bound by residues Gln822, Glu834, and Asn836. One can recognise an MGS-like domain in the interval 932-1066 (INLPKHKKMI…ELSLIDIARI (135 aa)). An allosteric domain region spans residues 932–1066 (INLPKHKKMI…ELSLIDIARI (135 aa)).

Belongs to the CarB family. Composed of two chains; the small (or glutamine) chain promotes the hydrolysis of glutamine to ammonia, which is used by the large (or ammonia) chain to synthesize carbamoyl phosphate. Tetramer of heterodimers (alpha,beta)4. Requires Mg(2+) as cofactor. Mn(2+) serves as cofactor.

The enzyme catalyses hydrogencarbonate + L-glutamine + 2 ATP + H2O = carbamoyl phosphate + L-glutamate + 2 ADP + phosphate + 2 H(+). The catalysed reaction is hydrogencarbonate + NH4(+) + 2 ATP = carbamoyl phosphate + 2 ADP + phosphate + 2 H(+). It participates in amino-acid biosynthesis; L-arginine biosynthesis; carbamoyl phosphate from bicarbonate: step 1/1. It functions in the pathway pyrimidine metabolism; UMP biosynthesis via de novo pathway; (S)-dihydroorotate from bicarbonate: step 1/3. Its function is as follows. Large subunit of the glutamine-dependent carbamoyl phosphate synthetase (CPSase). CPSase catalyzes the formation of carbamoyl phosphate from the ammonia moiety of glutamine, carbonate, and phosphate donated by ATP, constituting the first step of 2 biosynthetic pathways, one leading to arginine and/or urea and the other to pyrimidine nucleotides. The large subunit (synthetase) binds the substrates ammonia (free or transferred from glutamine from the small subunit), hydrogencarbonate and ATP and carries out an ATP-coupled ligase reaction, activating hydrogencarbonate by forming carboxy phosphate which reacts with ammonia to form carbamoyl phosphate. The protein is Carbamoyl phosphate synthase large chain of Lachnoclostridium phytofermentans (strain ATCC 700394 / DSM 18823 / ISDg) (Clostridium phytofermentans).